Here is a 120-residue protein sequence, read N- to C-terminus: Large ribosomal subunit protein eL18 (120 aa).

Belongs to the eukaryotic ribosomal protein eL18 family.

In Pyrococcus horikoshii (strain ATCC 700860 / DSM 12428 / JCM 9974 / NBRC 100139 / OT-3), this protein is Large ribosomal subunit protein eL18.